Here is a 176-residue protein sequence, read N- to C-terminus: Cathelicidin-2 (176 aa).

Residues 1 to 29 form the signal peptide; sequence METQGASLSLGRWSLWLLLLGLVVPLASA. Pyrrolidone carboxylic acid is present on Gln30. Positions 30–130 are excised as a propeptide; sequence QALSYREAVL…DINCNELQSV (101 aa). 2 cysteine pairs are disulfide-bonded: Cys85–Cys96 and Cys107–Cys124. Residues 135 to 176 form a disordered region; it reads PIRRPPIRPPFNPPFRPPVRPPFRPPFRPPFRPPIGPFPGRR. A compositionally biased stretch (pro residues) spans 141 to 176; the sequence is IRPPFNPPFRPPVRPPFRPPFRPPFRPPIGPFPGRR. Pro173 is modified (proline amide). Positions 174–176 are cleaved as a propeptide — removed in mature form; it reads GRR.

Belongs to the cathelicidin family. In terms of processing, elastase is responsible for its maturation.

The protein localises to the secreted. Binds to the lipid A moiety of bacterial lipopolysaccharides (LPS), a glycolipid present in the outer membrane of all Gram-negative bacteria. Shows a potent antimicrobial activity against the Gram-negative bacteria E.coli, S.typhimurium and P.aeruginosa. Less active against the Gram-positive bacteria S.aureus, L.monocytogenes and B.subtilis. This Capra hircus (Goat) protein is Cathelicidin-2 (CATHL2).